The following is a 234-amino-acid chain: Segregation and condensation protein A (234 aa).

The protein belongs to the ScpA family. Component of a cohesin-like complex composed of ScpA, ScpB and the Smc homodimer, in which ScpA and ScpB bind to the head domain of Smc. The presence of the three proteins is required for the association of the complex with DNA.

It localises to the cytoplasm. Functionally, participates in chromosomal partition during cell division. May act via the formation of a condensin-like complex containing Smc and ScpB that pull DNA away from mid-cell into both cell halves. The sequence is that of Segregation and condensation protein A from Streptococcus pyogenes serotype M5 (strain Manfredo).